The chain runs to 663 residues: UvrABC system protein B (663 aa).

Residues 30–417 (EGIKAGKRHQ…TDKMVEQIIR (388 aa)) enclose the Helicase ATP-binding domain. 43-50 (GATGTGKT) contributes to the ATP binding site. The Beta-hairpin signature appears at 96-119 (YYDYYQPEAYVPSTDTFIEKDASI). The region spanning 434-600 (QIDDLLSEIQ…TINKKIHDLI (167 aa)) is the Helicase C-terminal domain. Residues 627 to 662 (QKTIDNIEKEMKQAAKDLDFEKATELRDMLFELKAE) enclose the UVR domain.

This sequence belongs to the UvrB family. As to quaternary structure, forms a heterotetramer with UvrA during the search for lesions. Interacts with UvrC in an incision complex.

The protein localises to the cytoplasm. Functionally, the UvrABC repair system catalyzes the recognition and processing of DNA lesions. A damage recognition complex composed of 2 UvrA and 2 UvrB subunits scans DNA for abnormalities. Upon binding of the UvrA(2)B(2) complex to a putative damaged site, the DNA wraps around one UvrB monomer. DNA wrap is dependent on ATP binding by UvrB and probably causes local melting of the DNA helix, facilitating insertion of UvrB beta-hairpin between the DNA strands. Then UvrB probes one DNA strand for the presence of a lesion. If a lesion is found the UvrA subunits dissociate and the UvrB-DNA preincision complex is formed. This complex is subsequently bound by UvrC and the second UvrB is released. If no lesion is found, the DNA wraps around the other UvrB subunit that will check the other stand for damage. The polypeptide is UvrABC system protein B (Staphylococcus aureus (strain COL)).